The following is a 443-amino-acid chain: Probable glycine dehydrogenase (decarboxylating) subunit 1 (443 aa).

Belongs to the GcvP family. N-terminal subunit subfamily. The glycine cleavage system is composed of four proteins: P, T, L and H. In this organism, the P 'protein' is a heterodimer of two subunits.

It catalyses the reaction N(6)-[(R)-lipoyl]-L-lysyl-[glycine-cleavage complex H protein] + glycine + H(+) = N(6)-[(R)-S(8)-aminomethyldihydrolipoyl]-L-lysyl-[glycine-cleavage complex H protein] + CO2. Its function is as follows. The glycine cleavage system catalyzes the degradation of glycine. The P protein binds the alpha-amino group of glycine through its pyridoxal phosphate cofactor; CO(2) is released and the remaining methylamine moiety is then transferred to the lipoamide cofactor of the H protein. This chain is Probable glycine dehydrogenase (decarboxylating) subunit 1, found in Chloroherpeton thalassium (strain ATCC 35110 / GB-78).